The sequence spans 141 residues: Large ribosomal subunit protein uL11c (141 aa).

Belongs to the universal ribosomal protein uL11 family. As to quaternary structure, part of the ribosomal stalk of the 50S ribosomal subunit. Interacts with L10 and the large rRNA to form the base of the stalk. L10 forms an elongated spine to which L12 dimers bind in a sequential fashion forming a multimeric L10(L12)X complex.

It is found in the plastid. The protein localises to the chloroplast. Functionally, forms part of the ribosomal stalk which helps the ribosome interact with GTP-bound translation factors. This is Large ribosomal subunit protein uL11c from Cyanidium caldarium (Red alga).